The sequence spans 277 residues: Bis(5'-nucleosyl)-tetraphosphatase, symmetrical (277 aa).

It belongs to the Ap4A hydrolase family.

It catalyses the reaction P(1),P(4)-bis(5'-adenosyl) tetraphosphate + H2O = 2 ADP + 2 H(+). Functionally, hydrolyzes diadenosine 5',5'''-P1,P4-tetraphosphate to yield ADP. The chain is Bis(5'-nucleosyl)-tetraphosphatase, symmetrical from Azotobacter vinelandii (strain DJ / ATCC BAA-1303).